The sequence spans 404 residues: Neutral protease 2 homolog AFLA_065450 (404 aa).

An N-terminal signal peptide occupies residues 1–19 (MRFISASSLLLALAPTLNA). A propeptide spanning residues 20-185 (VPVEVAGSAQ…TQAVKILERR (166 aa)) is cleaved from the precursor. 2 cysteine pairs are disulfide-bonded: cysteine 191–cysteine 263 and cysteine 270–cysteine 288. Residue histidine 313 coordinates Zn(2+). Residue glutamate 314 is part of the active site. Zn(2+)-binding residues include histidine 317 and aspartate 328.

The protein belongs to the peptidase M35 family. Requires Zn(2+) as cofactor.

Its subcellular location is the secreted. The enzyme catalyses Preferential cleavage of bonds with hydrophobic residues in P1'. Also 3-Asn-|-Gln-4 and 8-Gly-|-Ser-9 bonds in insulin B chain.. Functionally, secreted metalloproteinase that allows assimilation of proteinaceous substrates. Shows high activities on basic nuclear substrates such as histone and protamine. This is Neutral protease 2 homolog AFLA_065450 from Aspergillus flavus (strain ATCC 200026 / FGSC A1120 / IAM 13836 / NRRL 3357 / JCM 12722 / SRRC 167).